A 337-amino-acid polypeptide reads, in one-letter code: Phosphate acyltransferase (337 aa).

It belongs to the PlsX family. In terms of assembly, homodimer. Probably interacts with PlsY.

It is found in the cytoplasm. The catalysed reaction is a fatty acyl-[ACP] + phosphate = an acyl phosphate + holo-[ACP]. The protein operates within lipid metabolism; phospholipid metabolism. Catalyzes the reversible formation of acyl-phosphate (acyl-PO(4)) from acyl-[acyl-carrier-protein] (acyl-ACP). This enzyme utilizes acyl-ACP as fatty acyl donor, but not acyl-CoA. The chain is Phosphate acyltransferase from Listeria welshimeri serovar 6b (strain ATCC 35897 / DSM 20650 / CCUG 15529 / CIP 8149 / NCTC 11857 / SLCC 5334 / V8).